The primary structure comprises 418 residues: UDP-N-acetylglucosamine 1-carboxyvinyltransferase (418 aa).

A phosphoenolpyruvate-binding site is contributed by 23 to 24 (KN). R93 contributes to the UDP-N-acetyl-alpha-D-glucosamine binding site. D117 serves as the catalytic Proton donor. UDP-N-acetyl-alpha-D-glucosamine contacts are provided by D305 and V327.

The protein belongs to the EPSP synthase family. MurA subfamily.

The protein localises to the cytoplasm. The enzyme catalyses phosphoenolpyruvate + UDP-N-acetyl-alpha-D-glucosamine = UDP-N-acetyl-3-O-(1-carboxyvinyl)-alpha-D-glucosamine + phosphate. It participates in cell wall biogenesis; peptidoglycan biosynthesis. Its function is as follows. Cell wall formation. Adds enolpyruvyl to UDP-N-acetylglucosamine. This chain is UDP-N-acetylglucosamine 1-carboxyvinyltransferase, found in Mycobacterium leprae (strain TN).